The chain runs to 317 residues: Ret finger protein-like 3 (317 aa).

The RING-type zinc-finger motif lies at 40-82 (CPVCSDYLEKPMSLECGCTVCLKCINSLQKEPHGEDLLCCCCS). The B30.2/SPRY domain maps to 107–301 (EPKLKKILQM…DQGVLSICPL (195 aa)).

Expressed during neurogenesis in differentiating human embryonic stem cells and in the developing human neocortex.

The protein resides in the cytoplasm. The protein localises to the nucleus. (Microbial infection) Stimulates the activity of Human Immunodeficiency Virus 1/HIV-1 pre-integration complex. The protein is Ret finger protein-like 3 (RFPL3) of Homo sapiens (Human).